A 274-amino-acid polypeptide reads, in one-letter code: 2,3,4,5-tetrahydropyridine-2,6-dicarboxylate N-succinyltransferase (274 aa).

2 residues coordinate substrate: R104 and D141.

Belongs to the transferase hexapeptide repeat family. In terms of assembly, homotrimer.

It localises to the cytoplasm. It catalyses the reaction (S)-2,3,4,5-tetrahydrodipicolinate + succinyl-CoA + H2O = (S)-2-succinylamino-6-oxoheptanedioate + CoA. The protein operates within amino-acid biosynthesis; L-lysine biosynthesis via DAP pathway; LL-2,6-diaminopimelate from (S)-tetrahydrodipicolinate (succinylase route): step 1/3. The sequence is that of 2,3,4,5-tetrahydropyridine-2,6-dicarboxylate N-succinyltransferase from Salmonella choleraesuis (strain SC-B67).